A 588-amino-acid polypeptide reads, in one-letter code: Tannase (588 aa).

A signal peptide spans 1–18 (MRQHSRMAVAALAAGANA). 3 disulfides stabilise this stretch: C25–C71, C194–C502, and C261–C278. S195 (acyl-ester intermediate) is an active-site residue. 4 residues coordinate Ca(2+): D262, D265, D269, and V271. Q317 is subject to Pyrrolidone carboxylic acid. Catalysis depends on charge relay system residues D455 and H501.

This sequence belongs to the tannase family. In terms of assembly, heterooctamer of 4 33 kDa and 4 30 kDa subunits linked by disulfide bond(s). The protein is glycosylated to a carbohydrate content of 22.7%. Post-translationally, the N-terminus of the 30 kDa subunit is blocked.

It catalyses the reaction digallate + H2O = 2 3,4,5-trihydroxybenzoate + H(+). In terms of biological role, hydrolyzes ester bonds of tannic acid to produce gallic acid and glucose. In Aspergillus oryzae (strain ATCC 42149 / RIB 40) (Yellow koji mold), this protein is Tannase.